The following is a 283-amino-acid chain: MTAPRLTLPSPAKLNLMLHILGRREDGYHELQTLFQFLDYGDEITFAVRDDGVIRLHTEFDGVPHDSNLIVRAAKKLQEQSACSLGIDIWIDKILPMGGGIGGGSSNAATTLLGLNHLWRLGWDEDRLAALGLTLGADVPVFVRGHAAFAEGVGEKLTPVEPAEPWYVVLVPQVSVSTAEIFSDPLLTRNTPPIKVRPVPEGNSRNDCLPVVSRRYPEVRNALNLLGNFTEAKLTGTGSCVFGGFPSKAEADKVSALLTETLTGFVAKGSNVSMLHRKLQSLL.

The active site involves lysine 13. 96-106 is a binding site for ATP; it reads PMGGGIGGGSS. Residue aspartate 138 is part of the active site.

It belongs to the GHMP kinase family. IspE subfamily.

The enzyme catalyses 4-CDP-2-C-methyl-D-erythritol + ATP = 4-CDP-2-C-methyl-D-erythritol 2-phosphate + ADP + H(+). The protein operates within isoprenoid biosynthesis; isopentenyl diphosphate biosynthesis via DXP pathway; isopentenyl diphosphate from 1-deoxy-D-xylulose 5-phosphate: step 3/6. In terms of biological role, catalyzes the phosphorylation of the position 2 hydroxy group of 4-diphosphocytidyl-2C-methyl-D-erythritol. This Pseudomonas fluorescens (strain Pf0-1) protein is 4-diphosphocytidyl-2-C-methyl-D-erythritol kinase.